A 389-amino-acid polypeptide reads, in one-letter code: Nicotinate phosphoribosyltransferase (389 aa).

Residue His216 is modified to Phosphohistidine; by autocatalysis.

This sequence belongs to the NAPRTase family. Transiently phosphorylated on a His residue during the reaction cycle. Phosphorylation strongly increases the affinity for substrates and increases the rate of nicotinate D-ribonucleotide production. Dephosphorylation regenerates the low-affinity form of the enzyme, leading to product release.

The enzyme catalyses nicotinate + 5-phospho-alpha-D-ribose 1-diphosphate + ATP + H2O = nicotinate beta-D-ribonucleotide + ADP + phosphate + diphosphate. It functions in the pathway cofactor biosynthesis; NAD(+) biosynthesis; nicotinate D-ribonucleotide from nicotinate: step 1/1. Catalyzes the synthesis of beta-nicotinate D-ribonucleotide from nicotinate and 5-phospho-D-ribose 1-phosphate at the expense of ATP. The polypeptide is Nicotinate phosphoribosyltransferase (Ralstonia pickettii (strain 12J)).